We begin with the raw amino-acid sequence, 458 residues long: Gamma aminobutyrate transaminase 2 (458 aa).

114–115 (GS) contributes to the pyridoxal 5'-phosphate binding site. Substrate is bound at residue Y147. Position 254 (D254) interacts with pyridoxal 5'-phosphate. Position 283 (K283) interacts with substrate. N6-(pyridoxal phosphate)lysine is present on K283.

This sequence belongs to the class-III pyridoxal-phosphate-dependent aminotransferase family. As to expression, expressed in leaves, roots, stems, flowers and fruits. Expressed in carpels, but not in stamens.

The protein localises to the cytoplasm. It catalyses the reaction 4-aminobutanoate + pyruvate = succinate semialdehyde + L-alanine. The catalysed reaction is 4-aminobutanoate + glyoxylate = succinate semialdehyde + glycine. Functionally, transaminase that degrades gamma-amino butyric acid (GABA) and uses pyruvate or glyoxylate as amino-group acceptor. Cannot use beta-alanine, ornithine, acetylornithine, serine, glycine, asparagine, glutamine, glutamate, valine, leucine, isoleucine, methionine, phenylalanine, histidine, lysine, arginine, aspartate, threonine, tyrosine, tryptophan, proline, or cysteine as amino donors. May be responsible for establishing the GABA gradient in the carpel. In Solanum lycopersicum (Tomato), this protein is Gamma aminobutyrate transaminase 2 (GABA-TP2).